The primary structure comprises 126 residues: Small ribosomal subunit protein uS12m (126 aa).

Disordered stretches follow at residues 1-27 and 106-126; these read MPTMNQLVRKGRESKRRTKRTRALNKC and GIPGRRRGRSKYGTKKPKDYI. Composition is skewed to basic residues over residues 12–23 and 109–120; these read RESKRRTKRTRA and GRRRGRSKYGTK.

Belongs to the universal ribosomal protein uS12 family.

It is found in the mitochondrion. Protein S12 is involved in the translation initiation step. This chain is Small ribosomal subunit protein uS12m (RPS12), found in Marchantia polymorpha (Common liverwort).